Here is a 917-residue protein sequence, read N- to C-terminus: Probable dipeptidyl-aminopeptidase B (917 aa).

Positions 1 to 16 (MATEKGHGRDDEERVP) are enriched in basic and acidic residues. Residues 1 to 21 (MATEKGHGRDDEERVPLTRGS) are disordered. Residues 1–99 (MATEKGHGRD…KPMHKSVKIA (99 aa)) are Cytoplasmic-facing. The helical; Signal-anchor for type II membrane protein transmembrane segment at 100–120 (LWTLLFLSLGGWSLAFVLFIF) threads the bilayer. Topologically, residues 121-917 (RSHDTYETPI…RAATWAGLSI (797 aa)) are vacuolar. 3 N-linked (GlcNAc...) asparagine glycosylation sites follow: Asn-135, Asn-351, and Asn-574. Catalysis depends on Ser-756, which acts as the Charge relay system. Asn-815 carries N-linked (GlcNAc...) asparagine glycosylation. Active-site charge relay system residues include Asp-833 and His-866. Asn-902 carries an N-linked (GlcNAc...) asparagine glycan.

Belongs to the peptidase S9B family.

It is found in the vacuole membrane. It carries out the reaction Release of an N-terminal dipeptide, Xaa-Yaa-|-Zaa-, from a polypeptide, preferentially when Yaa is Pro, provided Zaa is neither Pro nor hydroxyproline.. Its function is as follows. Type IV dipeptidyl-peptidase which removes N-terminal dipeptides sequentially from polypeptides having unsubstituted N-termini provided that the penultimate residue is proline. The sequence is that of Probable dipeptidyl-aminopeptidase B (DAPB) from Ajellomyces capsulatus (strain H88) (Darling's disease fungus).